A 343-amino-acid chain; its full sequence is Leucine-rich repeat-containing protein 39 (343 aa).

10 LRR repeats span residues 64–87 (EEGRVILRIEKEEWKTLPPALVQL), 88–110 (SQIQEWQLHRIGLQRIPRFISSF), 111–133 (QSLIVLDLSRNSVTEIPKEIGKL), 134–156 (TRLRELLLSYNRVSYVPEELGCC), 158–180 (NLEKLELAMNRDLDELPTQLSNL), 181–203 (KKLSHLDLSMNQFTTIPDCVVNL), 204–226 (PSLEWLDMGSNILETLPDNIHRM), 228–249 (KLHTLWLPRNELEYLPDNISRM), 250–274 (KSLDTLVLSKNKLRDIPPLMEGMSN), and 275–295 (LRFVNFRDNPLTYDVTLPDLN).

The protein resides in the cytoplasm. Its subcellular location is the myofibril. The protein localises to the sarcomere. It localises to the m line. In terms of biological role, component of the sarcomeric M-band which plays a role in myocyte response to biomechanical stress. May regulate expression of other M-band proteins via an SRF-dependent pathway. Important for normal contractile function in heart. This is Leucine-rich repeat-containing protein 39 from Danio rerio (Zebrafish).